The primary structure comprises 487 residues: Glutamyl-tRNA(Gln) amidotransferase subunit A (487 aa).

Residues lysine 75 and serine 150 each act as charge relay system in the active site. The active-site Acyl-ester intermediate is the serine 174.

It belongs to the amidase family. GatA subfamily. Heterotrimer of A, B and C subunits.

It catalyses the reaction L-glutamyl-tRNA(Gln) + L-glutamine + ATP + H2O = L-glutaminyl-tRNA(Gln) + L-glutamate + ADP + phosphate + H(+). Functionally, allows the formation of correctly charged Gln-tRNA(Gln) through the transamidation of misacylated Glu-tRNA(Gln) in organisms which lack glutaminyl-tRNA synthetase. The reaction takes place in the presence of glutamine and ATP through an activated gamma-phospho-Glu-tRNA(Gln). The protein is Glutamyl-tRNA(Gln) amidotransferase subunit A of Syntrophomonas wolfei subsp. wolfei (strain DSM 2245B / Goettingen).